The chain runs to 59 residues: Large ribosomal subunit protein uL30 (59 aa).

This sequence belongs to the universal ribosomal protein uL30 family. Part of the 50S ribosomal subunit.

The polypeptide is Large ribosomal subunit protein uL30 (Photorhabdus laumondii subsp. laumondii (strain DSM 15139 / CIP 105565 / TT01) (Photorhabdus luminescens subsp. laumondii)).